Reading from the N-terminus, the 202-residue chain is Peptide deformylase (202 aa).

Cys-121 and His-163 together coordinate Fe cation. Glu-164 is an active-site residue. Residue His-167 participates in Fe cation binding.

This sequence belongs to the polypeptide deformylase family. It depends on Fe(2+) as a cofactor.

The catalysed reaction is N-terminal N-formyl-L-methionyl-[peptide] + H2O = N-terminal L-methionyl-[peptide] + formate. Removes the formyl group from the N-terminal Met of newly synthesized proteins. Requires at least a dipeptide for an efficient rate of reaction. N-terminal L-methionine is a prerequisite for activity but the enzyme has broad specificity at other positions. The polypeptide is Peptide deformylase (Synechococcus sp. (strain CC9311)).